Reading from the N-terminus, the 504-residue chain is Histidine ammonia-lyase (504 aa).

The 5-imidazolinone (Ala-Gly) cross-link spans 142-144 (ASG). Ser143 carries the post-translational modification 2,3-didehydroalanine (Ser).

It belongs to the PAL/histidase family. Post-translationally, contains an active site 4-methylidene-imidazol-5-one (MIO), which is formed autocatalytically by cyclization and dehydration of residues Ala-Ser-Gly.

The protein localises to the cytoplasm. It catalyses the reaction L-histidine = trans-urocanate + NH4(+). It functions in the pathway amino-acid degradation; L-histidine degradation into L-glutamate; N-formimidoyl-L-glutamate from L-histidine: step 1/3. The protein is Histidine ammonia-lyase of Staphylococcus aureus (strain bovine RF122 / ET3-1).